A 770-amino-acid polypeptide reads, in one-letter code: Signal transducer and activator of transcription 3 (770 aa).

An N-acetylalanine modification is found at alanine 2. An N6-acetyllysine mark is found at lysine 49 and lysine 87. Residues aspartate 150 to methionine 162 carry the Essential for nuclear import motif. Positions tryptophan 580–leucine 670 constitute an SH2 domain. Residues lysine 601, lysine 615, and lysine 631 each carry the allysine; alternate modification. N6-acetyllysine; alternate is present on residues lysine 601, lysine 615, and lysine 631. Tyrosine 640 bears the Phosphotyrosine; by TYK2 mark. Lysine 685 is modified (allysine; alternate). At lysine 685 the chain carries N6-acetyllysine; alternate. Proline 704 is modified (phosphotyrosine). Position 705 is a phosphotyrosine; by FER and PTK6 (tyrosine 705). At lysine 707 the chain carries N6-acetyllysine. Threonine 714 bears the Phosphothreonine mark. A Phosphoserine; by DYRK2, NLK, NEK6, IRAK1, RPS6KA5, ZIPK/DAPK3 and PKC/PRKCE modification is found at serine 727.

It belongs to the transcription factor STAT family. Forms a homodimer or a heterodimer with a related family member (at least STAT1). Component of a promoter-binding complex composed of STAT3, NFATC3 and NFATC4; complex formation is enhanced by calcineurin. Interacts with IL31RA, NCOA1, PELP1, SIPAR, SOCS7, STATIP1 and TMF1. Interacts with IL23R in presence of IL23. Interacts (via SH2 domain) with NLK. Interacts with ARL2BP; the interaction is enhanced by LIF and JAK1 expression. Interacts with KPNA4 and KPNA5; KPNA4 may be the primary mediator of nuclear import. Interacts with CAV2; the interaction is increased on insulin-induced tyrosine phosphorylation of CAV2 and leads to STAT3 activation. Interacts with ARL2BP; interaction is enhanced with ARL2. Interacts with NEK6. Binds to CDK9 when activated and nuclear. Interacts with BMX. Interacts with ZIPK/DAPK3. Interacts with PIAS3; the interaction occurs on stimulation by IL6, CNTF or OSM and inhibits the DNA binding activity of STAT3. In prostate cancer cells, interacts with PRKCE and promotes DNA binding activity of STAT3. Interacts with STMN3, antagonizing its microtubule-destabilizing activity. Interacts with the 'Lys-129' acetylated form of BIRC5/survivin. Interacts with FER. Interacts (via SH2 domain) with EIF2AK2/PKR (via the kinase catalytic domain). Interacts with INPP5F; the interaction is independent of STAT3 Tyr-705 phosphorylation status. Interacts with FGFR4. Interacts with OCIAD1. Interacts with OCIAD2. Interacts (unphosphorylated or phosphorylated at Ser-727) with PHB1. Interacts and may form heterodimers with NHLH1. Found in a complex with SLC39A6, SLC39A10 and with the 'Ser-727' phosphorylated form of STAT3 throughout mitosis. Interacts (when phosphorylated at Tyr-705) with CD274/PD-L1; promoting nuclear translocation of CD274/PD-L1. Interacts (when acetylated) with EP300 (via bromo domain); interaction takes place following STAT3 acetylation by EP300 and promotes enhanceosome assembly. Interacts (when acetylated) with BRD2 (via bromo domain); interaction promotes STAT3 recruitment to chromatin and T-helper Th17 cell differentiation. Interacts with FAM220A/SIPAR; the interaction occurs in both the nucleus and the cytoplasm, is enhanced by IL6 and promotes STAT3 dephosphorylation. Interacts in both unphosphorylated and phosphorylated forms with FAM220A but interacts preferentially in the phosphorylated form in the nucleus. Interacts with PTPN2; the interaction is promoted by FAM220A and leads to STAT3 dephosphorylation which negatively regulates STAT3 transcriptional activator activity. As to quaternary structure, (Microbial infection) Interacts with HCV core protein. In terms of assembly, (Microbial infection) Interacts with S.typhimurium SarA. (Microbial infection) Interacts with human cytomegalovirus (HHV-5) immediate early protein IE1; this interaction leads to STAT3 nuclear accumulation and disruption of IL6-induced STAT3 phosphorylation. Tyrosine phosphorylated upon stimulation with EGF. Tyrosine phosphorylated in response to constitutively activated FGFR1, FGFR2, FGFR3 and FGFR4. Activated through tyrosine phosphorylation by BMX. Tyrosine phosphorylated in response to IL6, IL11, LIF, CNTF, KITLG/SCF, CSF1, EGF, PDGF, IFN-alpha, LEP and OSM. Activated KIT promotes phosphorylation on tyrosine residues and subsequent translocation to the nucleus. Phosphorylated on serine upon DNA damage, probably by ATM or ATR. Serine phosphorylation is important for the formation of stable DNA-binding STAT3 homodimers and maximal transcriptional activity. ARL2BP may participate in keeping the phosphorylated state of STAT3 within the nucleus. Upon LPS challenge, phosphorylated within the nucleus by IRAK1. Upon erythropoietin treatment, phosphorylated on Ser-727 by RPS6KA5. Dephosphorylation on tyrosine residues by PTPN2 negatively regulates IL6/interleukin-6 signaling. Phosphorylation at Tyr-705 by PTK6, isoform M2 of PKM (PKM2) or FER leads to an increase of its transcriptional activity. Phosphorylation at Tyr-705 is increased in the presence of calcineurin. Phosphorylation at Tyr-640 by TYK2 negatively regulates transcriptional activity. Post-translationally, acetylated on lysine residues by EP300/p300, promoting its activation. Acetylation at Lys-49 and Lys-87 by EP300/p300 promotes its activation. Acetylation at Lys-87 by EP300/p300 promotes its association with BRD2 and recruitment to chromatin. Deacetylated at Lys-49 and Lys-87 by HDAC1. Acetylation at Lys-685 by EP300/p300 promotes its homodimerization and activation. Deacetylated at Lys-685 by HDAC3. Acetylated on lysine residues by CREBBP. Deacetylation by LOXL3 leads to disrupt STAT3 dimerization and inhibit STAT3 transcription activity. Oxidation of lysine residues to allysine on STAT3 preferentially takes place on lysine residues that are acetylated. In terms of processing, some lysine residues are oxidized to allysine by LOXL3, leading to disrupt STAT3 dimerization and inhibit STAT3 transcription activity. Oxidation of lysine residues to allysine on STAT3 preferentially takes place on lysine residues that are acetylated. (Microbial infection) Phosphorylated on Tyr-705 in the presence of S.typhimurium SarA. In terms of tissue distribution, heart, brain, placenta, lung, liver, skeletal muscle, kidney and pancreas. Expressed in naive CD4(+) T cells as well as T-helper Th17, Th1 and Th2 cells.

The protein resides in the cytoplasm. It localises to the nucleus. Signal transducer and transcription activator that mediates cellular responses to interleukins, KITLG/SCF, LEP and other growth factors. Once activated, recruits coactivators, such as NCOA1 or MED1, to the promoter region of the target gene. May mediate cellular responses to activated FGFR1, FGFR2, FGFR3 and FGFR4. Upon activation of IL6ST/gp130 signaling by interleukin-6 (IL6), binds to the IL6-responsive elements identified in the promoters of various acute-phase protein genes. Activated by IL31 through IL31RA. Acts as a regulator of inflammatory response by regulating differentiation of naive CD4(+) T-cells into T-helper Th17 or regulatory T-cells (Treg): acetylation promotes its transcription activity and cell differentiation while deacetylation and oxidation of lysine residues by LOXL3 inhibits differentiation. Involved in cell cycle regulation by inducing the expression of key genes for the progression from G1 to S phase, such as CCND1. Mediates the effects of LEP on melanocortin production, body energy homeostasis and lactation. May play an apoptotic role by transctivating BIRC5 expression under LEP activation. Cytoplasmic STAT3 represses macroautophagy by inhibiting EIF2AK2/PKR activity. Plays a crucial role in basal beta cell functions, such as regulation of insulin secretion. Following JAK/STAT signaling activation and as part of a complex with NFATC3 and NFATC4, binds to the alpha-beta E4 promoter region of CRYAB and activates transcription in cardiomyocytes. This chain is Signal transducer and activator of transcription 3, found in Homo sapiens (Human).